Here is a 485-residue protein sequence, read N- to C-terminus: Serine/threonine-protein kinase 4 (485 aa).

In terms of domain architecture, Protein kinase spans 30–281 (FDVLEKLGEG…ATELLQHPFI (252 aa)). ATP is bound by residues 36–44 (LGEGSYGSV) and K59. D149 functions as the Proton acceptor in the catalytic mechanism. Residue T183 is modified to Phosphothreonine; by autocatalysis. The stretch at 287-313 (ESILRHLINEAQDAKLKRTELKQREVE) forms a coiled coil. The SARAH domain occupies 431 to 478 (YSFLKDWSVTELQLRLNSLDPMMEQEIEEIHHKYQAKRQPILEAIESK).

The protein belongs to the protein kinase superfamily. STE Ser/Thr protein kinase family. STE20 subfamily. In terms of assembly, homodimer; mediated via the coiled-coil region. Mg(2+) is required as a cofactor. Post-translationally, autophosphorylated on Thr-183. In terms of processing, proteolytically cleaved by caspase-3 during apoptosis at Asp-326 resulting in a 37 kDa form. Proteolytic cleavage results in kinase activation and nuclear translocation of the truncated form (MST1/N).

It localises to the cytoplasm. The protein localises to the nucleus. The catalysed reaction is L-seryl-[protein] + ATP = O-phospho-L-seryl-[protein] + ADP + H(+). It catalyses the reaction L-threonyl-[protein] + ATP = O-phospho-L-threonyl-[protein] + ADP + H(+). With respect to regulation, the C-terminal non-catalytic region inhibits the kinase activity, the enzyme is activated by caspase-cleavage. Homodimerization and autophosphorylation of Thr-183 is also required for full activation. Its function is as follows. Stress-activated, pro-apoptotic kinase which, following caspase-cleavage, enters the nucleus and induces chromatin condensation followed by internucleosomal DNA fragmentation. Key component of the Hippo signaling pathway which plays a pivotal role in organ size control and tumor suppression by restricting proliferation and promoting apoptosis. The core of this pathway is composed of a kinase cascade wherein stk3/mst2 and stk4/mst1, in complex with its regulatory protein sav1, phosphorylates and activates lats1/2 in complex with its regulatory protein mob1, which in turn phosphorylates and inactivates yap1 oncoprotein and wwtr1/taz. Phosphorylation of yap1 by lats2 inhibits its translocation into the nucleus to regulate cellular genes important for cell proliferation, cell death, and cell migration. Phosphorylates 'Ser-14' of histone H2B (H2BS14ph) during apoptosis. In Xenopus tropicalis (Western clawed frog), this protein is Serine/threonine-protein kinase 4 (stk4).